The sequence spans 922 residues: Two-component sensor PprA (922 aa).

The span at 1 to 10 shows a compositional bias: low complexity; it reads MFEFSRSSSA. The interval 1 to 22 is disordered; that stretch reads MFEFSRSSSAEAERPEPFSQEG. Positions 506–558 constitute a PAC 1 domain; the sequence is VKTRYRLADGQGNWHWLYDEAKLLRDAQGLPSEAVGLWLDVTEQHLAAQRIAE. In terms of domain architecture, PAS spans 559–622; sequence SEERYRVLVE…EDASALRARL (64 aa). In terms of domain architecture, PAC 2 spans 632 to 684; that stretch reads EVPELRFNLPGQRFLWLVWAERPLFDARGELCEVQAVGRDNTPVRRAQQQLAQ. Positions 697–916 constitute a Histidine kinase domain; sequence GLAHEVKQPL…LFVVRLPLAA (220 aa). At His-700 the chain carries Phosphohistidine; by autocatalysis.

Autophosphorylated.

It catalyses the reaction ATP + protein L-histidine = ADP + protein N-phospho-L-histidine.. In terms of biological role, member of the two-component regulatory system PprA/PprB involved in biofilm formation by controlling the expression of many related genes including type IVb pili major subunit flp pilin, adhesin bapA or cupE fimbriae. Functions as a heme sensor histidine kinase which is autophosphorylated at a histidine residue and transfers its phosphate group to PprB. In Pseudomonas aeruginosa (strain ATCC 15692 / DSM 22644 / CIP 104116 / JCM 14847 / LMG 12228 / 1C / PRS 101 / PAO1), this protein is Two-component sensor PprA.